We begin with the raw amino-acid sequence, 303 residues long: Coenzyme PQQ synthesis protein B (303 aa).

This sequence belongs to the PqqB family.

It participates in cofactor biosynthesis; pyrroloquinoline quinone biosynthesis. In terms of biological role, may be involved in the transport of PQQ or its precursor to the periplasm. The sequence is that of Coenzyme PQQ synthesis protein B from Pseudomonas syringae pv. syringae (strain B728a).